A 78-amino-acid chain; its full sequence is Acyl carrier protein (78 aa).

Residues S2–A77 enclose the Carrier domain. S37 bears the O-(pantetheine 4'-phosphoryl)serine mark.

The protein belongs to the acyl carrier protein (ACP) family. Post-translationally, 4'-phosphopantetheine is transferred from CoA to a specific serine of apo-ACP by AcpS. This modification is essential for activity because fatty acids are bound in thioester linkage to the sulfhydryl of the prosthetic group.

The protein resides in the cytoplasm. The protein operates within lipid metabolism; fatty acid biosynthesis. Its function is as follows. Carrier of the growing fatty acid chain in fatty acid biosynthesis. This chain is Acyl carrier protein, found in Vibrio cholerae serotype O1 (strain ATCC 39315 / El Tor Inaba N16961).